Here is a 674-residue protein sequence, read N- to C-terminus: DNA ligase (674 aa).

Residues 34-38 (DFEFD), 83-84 (SL), and Glu-117 each bind NAD(+). Residue Lys-119 is the N6-AMP-lysine intermediate of the active site. 4 residues coordinate NAD(+): Arg-140, Glu-184, Lys-297, and Lys-321. Zn(2+) contacts are provided by Cys-415, Cys-418, Cys-433, and Cys-439. A BRCT domain is found at 598–674 (LVNNNFEGQS…IDEDEFERML (77 aa)).

The protein belongs to the NAD-dependent DNA ligase family. LigA subfamily. Mg(2+) is required as a cofactor. Mn(2+) serves as cofactor.

The catalysed reaction is NAD(+) + (deoxyribonucleotide)n-3'-hydroxyl + 5'-phospho-(deoxyribonucleotide)m = (deoxyribonucleotide)n+m + AMP + beta-nicotinamide D-nucleotide.. DNA ligase that catalyzes the formation of phosphodiester linkages between 5'-phosphoryl and 3'-hydroxyl groups in double-stranded DNA using NAD as a coenzyme and as the energy source for the reaction. It is essential for DNA replication and repair of damaged DNA. In Chlorobaculum tepidum (strain ATCC 49652 / DSM 12025 / NBRC 103806 / TLS) (Chlorobium tepidum), this protein is DNA ligase.